Consider the following 185-residue polypeptide: Inner membrane-spanning protein YciB (185 aa).

5 consecutive transmembrane segments (helical) span residues 27–47, 53–73, 76–96, 118–138, and 149–169; these read IVLV…YGIV, IMAS…EIRY, WKVT…QFQF, TLNL…IYIS, and FKSF…GVYI.

This sequence belongs to the YciB family.

The protein localises to the cell inner membrane. In terms of biological role, plays a role in cell envelope biogenesis, maintenance of cell envelope integrity and membrane homeostasis. This chain is Inner membrane-spanning protein YciB, found in Haemophilus influenzae (strain 86-028NP).